We begin with the raw amino-acid sequence, 141 residues long: Large ribosomal subunit protein uL11 (141 aa).

The protein belongs to the universal ribosomal protein uL11 family. As to quaternary structure, part of the ribosomal stalk of the 50S ribosomal subunit. Interacts with L10 and the large rRNA to form the base of the stalk. L10 forms an elongated spine to which L12 dimers bind in a sequential fashion forming a multimeric L10(L12)X complex. In terms of processing, one or more lysine residues are methylated.

Its function is as follows. Forms part of the ribosomal stalk which helps the ribosome interact with GTP-bound translation factors. This chain is Large ribosomal subunit protein uL11, found in Streptococcus mutans serotype c (strain ATCC 700610 / UA159).